A 266-amino-acid chain; its full sequence is Small ribosomal subunit protein uS2 (266 aa).

The disordered stretch occupies residues 238–266 (EFASAPDAGKKGRQAQPKKGKRASDAAAE). A compositionally biased stretch (basic residues) spans 248–258 (KGRQAQPKKGK).

It belongs to the universal ribosomal protein uS2 family.

This chain is Small ribosomal subunit protein uS2, found in Xylella fastidiosa (strain M12).